The sequence spans 549 residues: Glucose-6-phosphate isomerase (549 aa).

Catalysis depends on Glu-355, which acts as the Proton donor. Residues His-386 and Lys-514 contribute to the active site.

The protein belongs to the GPI family.

It is found in the cytoplasm. The catalysed reaction is alpha-D-glucose 6-phosphate = beta-D-fructose 6-phosphate. The protein operates within carbohydrate biosynthesis; gluconeogenesis. It participates in carbohydrate degradation; glycolysis; D-glyceraldehyde 3-phosphate and glycerone phosphate from D-glucose: step 2/4. Its function is as follows. Catalyzes the reversible isomerization of glucose-6-phosphate to fructose-6-phosphate. The polypeptide is Glucose-6-phosphate isomerase (Salmonella gallinarum (strain 287/91 / NCTC 13346)).